We begin with the raw amino-acid sequence, 297 residues long: Ribosomal RNA small subunit methyltransferase H (297 aa).

S-adenosyl-L-methionine is bound by residues 37-39 (GGH), Asp-56, Phe-87, Asp-102, and His-109.

Belongs to the methyltransferase superfamily. RsmH family.

It localises to the cytoplasm. It carries out the reaction cytidine(1402) in 16S rRNA + S-adenosyl-L-methionine = N(4)-methylcytidine(1402) in 16S rRNA + S-adenosyl-L-homocysteine + H(+). Its function is as follows. Specifically methylates the N4 position of cytidine in position 1402 (C1402) of 16S rRNA. This Borrelia turicatae (strain 91E135) protein is Ribosomal RNA small subunit methyltransferase H.